We begin with the raw amino-acid sequence, 515 residues long: GMP synthase [glutamine-hydrolyzing] (515 aa).

The region spanning 6–198 (KVIIIDYGSQ…LFHVAKLKAD (193 aa)) is the Glutamine amidotransferase type-1 domain. Cys83 (nucleophile) is an active-site residue. Active-site residues include His172 and Glu174. The region spanning 199–390 (WTMSSFVERA…LGLPDFIIWR (192 aa)) is the GMPS ATP-PPase domain. 226-232 (SGGIDST) provides a ligand contact to ATP.

As to quaternary structure, homodimer.

The enzyme catalyses XMP + L-glutamine + ATP + H2O = GMP + L-glutamate + AMP + diphosphate + 2 H(+). The protein operates within purine metabolism; GMP biosynthesis; GMP from XMP (L-Gln route): step 1/1. In terms of biological role, catalyzes the synthesis of GMP from XMP. The sequence is that of GMP synthase [glutamine-hydrolyzing] from Nitratidesulfovibrio vulgaris (strain DSM 19637 / Miyazaki F) (Desulfovibrio vulgaris).